A 384-amino-acid polypeptide reads, in one-letter code: Sialyltransferase-like protein 3 (384 aa).

The Cytoplasmic segment spans residues M1–H5. Residues W6 to F26 traverse the membrane as a helical; Signal-anchor for type II membrane protein segment. Topologically, residues R27–R384 are lumenal. An N-linked (GlcNAc...) asparagine glycan is attached at N241.

It belongs to the glycosyltransferase 29 family.

The protein localises to the golgi apparatus membrane. Possesses sialyltransferase-like activity in vitro. Transfers sialic acid to the glycoprotein asialofetuin. The transferred sialic acid is linked to galactose of Gal-beta-1,3-GalNAc through alpha-2,6-linkage. The polypeptide is Sialyltransferase-like protein 3 (Oryza sativa subsp. indica (Rice)).